We begin with the raw amino-acid sequence, 211 residues long: Succinate dehydrogenase subunit 4, mitochondrial (211 aa).

The transit peptide at Met1 to Leu36 directs the protein to the mitochondrion. The interval Arg41–Leu64 is disordered. His166 lines the heme pocket. Tyr179 is a binding site for a ubiquinone. The chain crosses the membrane as a helical span at residues Trp188–Leu210.

In terms of assembly, component of complex II composed of eight subunits in plants: four classical SDH subunits SDH1, SDH2, SDH3 and SDH4 (a flavoprotein (FP), an iron-sulfur protein (IP), and a cytochrome b composed of a large and a small subunit.), as well as four subunits unknown in mitochondria from bacteria and heterotrophic eukaryotes. Heme is required as a cofactor.

The protein localises to the mitochondrion inner membrane. Its pathway is carbohydrate metabolism; tricarboxylic acid cycle. Its function is as follows. Membrane-anchoring subunit of succinate dehydrogenase (SDH). The chain is Succinate dehydrogenase subunit 4, mitochondrial from Oryza sativa subsp. japonica (Rice).